We begin with the raw amino-acid sequence, 359 residues long: MIYNEKLYNSLLSMEEKFNDLNKELETEGLSVKRMSEINKSIKETTPIVEKFKEYKRTLNDIDSAEKLIKSEKDNEIIELAQLELSEKKPLIEKYEYELKVLLLPKDPNDDKNVIVEMRPAAGGDESSIFVGDLFSAYKRYADSLGWKVKMLEVQESSHGYGFISFMINGENVYSKMKFESGVHRVQRVPATESKGRVHTSTITVAVLPELEEVELVINNSDLKIDTYRASGAGGQHINKTESAVRITHIPTGIFVACQEGKSQIENRETAMKMLRAKLWEKKEEENRKNISDLRKGQVGTGERAEKIRTYNYPQNRVTDHRINLTLNKLDNVMLGNLSEIIDSLISHDEAVKMQEAKI.

Gln236 carries the N5-methylglutamine modification.

This sequence belongs to the prokaryotic/mitochondrial release factor family. In terms of processing, methylated by PrmC. Methylation increases the termination efficiency of RF1.

It localises to the cytoplasm. Functionally, peptide chain release factor 1 directs the termination of translation in response to the peptide chain termination codons UAG and UAA. The protein is Peptide chain release factor 1 of Malacoplasma penetrans (strain HF-2) (Mycoplasma penetrans).